The primary structure comprises 209 residues: Ubiquitin-conjugating enzyme E2 S (209 aa).

The UBC core domain occupies 14–160 (QTIRQVMREL…ARMMTEIHAQ (147 aa)). Cys98 acts as the Glycyl thioester intermediate in catalysis. The tract at residues 164–209 (CGVGASGDAKDDDGPSTKKHAGLDKKLQDKKKEKLLKEKKRMLKRL) is disordered. Residues 171 to 199 (DAKDDDGPSTKKHAGLDKKLQDKKKEKLL) show a composition bias toward basic and acidic residues. Over residues 200–209 (KEKKRMLKRL) the composition is skewed to basic residues.

The protein belongs to the ubiquitin-conjugating enzyme family.

It carries out the reaction S-ubiquitinyl-[E1 ubiquitin-activating enzyme]-L-cysteine + [E2 ubiquitin-conjugating enzyme]-L-cysteine = [E1 ubiquitin-activating enzyme]-L-cysteine + S-ubiquitinyl-[E2 ubiquitin-conjugating enzyme]-L-cysteine.. It functions in the pathway protein modification; protein ubiquitination. In terms of biological role, catalyzes the covalent attachment of ubiquitin to other proteins. Acts as an essential factor of the anaphase promoting complex/cyclosome (APC/C), a cell cycle-regulated ubiquitin ligase that controls progression through mitosis. Acts by specifically elongating polyubiquitin chains initiated by the E2 enzyme vih/UbcH10 on APC/C substrates, enhancing the degradation of APC/C substrates by the proteasome and promoting mitotic exit. The sequence is that of Ubiquitin-conjugating enzyme E2 S from Drosophila yakuba (Fruit fly).